The chain runs to 514 residues: Putative ankyrin repeat protein R863 (514 aa).

ANK repeat units follow at residues 45–74, 84–114, 115–144, 146–174, 176–204, 205–234, 236–264, 266–294, 295–324, 325–354, 356–384, 385–414, 415–444, 446–474, and 476–504; these read AKIDVIEYIVRNNLTDILKYIVVLKTLKHP, KSLNKLLIDNCEKRRLDIIQYLINIGADINS, KKNRAVRLASERGYLEIVKYLVSQGADVRA, KDYAVVWASRNGHLEVVKYLVSLGANIKV, DNFAVRWASRNGYIDVVKYLTSQDANIRA, DNNYAVRLASENGHIDVVKYLVSLGADIRA, NNYAIRHASRGGHIEVVEYLVSLGANVKS, NDCAVKFASKNGHLGVVKYLASQGADVRS, ENDYAFRMASENGHLEVVVYLVRQGVNVRA, DNNYAVRMASENGYLEIVKFLVSQGANIRS, NDYAIQKASKNGHLEVVEHLVNQGANFKS, DYDCAIKLASENGHLEVVKYLVSQDADIRV, NNDYAIRWASRNGHIEVVKYLVSQGADIRA, NDYAVRMASENGHLEVVKYLVNLGANVKA, and NNYAVGWASRNGHIGVVKYLVSQGADVRS.

The polypeptide is Putative ankyrin repeat protein R863 (Acanthamoeba polyphaga mimivirus (APMV)).